An 81-amino-acid polypeptide reads, in one-letter code: Photosystem I iron-sulfur center (81 aa).

2 consecutive 4Fe-4S ferredoxin-type domains span residues 2 to 31 and 39 to 68; these read SHTV…MIPW and IASS…VRVY. C11, C14, C17, C21, C48, C51, C54, and C58 together coordinate [4Fe-4S] cluster.

In terms of assembly, the eukaryotic PSI reaction center is composed of at least 11 subunits. The cofactor is [4Fe-4S] cluster.

The protein localises to the plastid. It is found in the chloroplast thylakoid membrane. The enzyme catalyses reduced [plastocyanin] + hnu + oxidized [2Fe-2S]-[ferredoxin] = oxidized [plastocyanin] + reduced [2Fe-2S]-[ferredoxin]. Its function is as follows. Apoprotein for the two 4Fe-4S centers FA and FB of photosystem I (PSI); essential for photochemical activity. FB is the terminal electron acceptor of PSI, donating electrons to ferredoxin. The C-terminus interacts with PsaA/B/D and helps assemble the protein into the PSI complex. Required for binding of PsaD and PsaE to PSI. PSI is a plastocyanin-ferredoxin oxidoreductase, converting photonic excitation into a charge separation, which transfers an electron from the donor P700 chlorophyll pair to the spectroscopically characterized acceptors A0, A1, FX, FA and FB in turn. This Chaetosphaeridium globosum (Charophycean green alga) protein is Photosystem I iron-sulfur center.